Consider the following 1093-residue polypeptide: Fused isobutyryl-CoA mutase (1093 aa).

The interval 1 to 20 (MTDLSDVSRTAAAKPPAVPG) is disordered. The B12-binding domain occupies 26-156 (KVRFVTAASL…AGMITDMAQR (131 aa)). H39 provides a ligand contact to adenosylcob(III)alamin. Residues 169–417 (LDTVVAGDRR…YQGLVGALGA (249 aa)) form a GTPase chaperone MeaI region. A GTP-binding site is contributed by 219–224 (GAGKSS). 4 residues coordinate Mg(2+): S223, I248, D249, and D262. Residue R265 coordinates GTP. Mg(2+) is bound by residues E310 and T311. Residue 357–360 (NKFD) coordinates GTP. Positions 418-579 (RGMSLKPGTL…MRENVPGSFP (162 aa)) are linker. 7 residues coordinate substrate: F587, R622, R728, Y772, S821, R856, and K861. GTP-binding residues include E973 and N1092.

It belongs to the IcmF family. In terms of assembly, homodimer. Requires adenosylcob(III)alamin as cofactor. It depends on Mg(2+) as a cofactor.

It catalyses the reaction 2-methylpropanoyl-CoA = butanoyl-CoA. The enzyme catalyses 3-methylbutanoyl-CoA = 2,2-dimethylpropanoyl-CoA. It carries out the reaction GTP + H2O = GDP + phosphate + H(+). Is prone to inactivation during catalytic turnover due to the occasional loss of the 5'-deoxyadenosine moiety and formation of the inactive cob(II)alamin cofactor in its active site. The GTPase activity of IcmF powers the ejection of the inactive cofactor and requires the presence of an acceptor protein, adenosyltransferase (ATR), for receiving it. ATR, in turn, catalyzes an adenosylation reaction converting cob(II)alamin in the presence of ATP and a reductant to the active AdoCbl cofactor. The repaired cofactor is then reloaded onto IcmF in a GTPase-gated step, regenerating active enzyme. The GTPase activity of IcmF is significantly decreased in the presence of excess of AdoCbl or cob(II)alamin and is higher in the apoenzyme state, indicating that the G-domain senses the presence and identity of the cofactor in the mutase active site. Functionally, catalyzes the reversible interconversion of isobutyryl-CoA and n-butyryl-CoA, and to a much lesser extent, of pivalyl-CoA and isovaleryl-CoA, using radical chemistry. Also exhibits GTPase activity, associated with its G-protein domain (MeaI) that functions as a chaperone that assists cofactor delivery and proper holo-enzyme assembly. The G-domain of IcmF also has a role in its cofactor repair. Does not display ATPase activity. The sequence is that of Fused isobutyryl-CoA mutase from Cupriavidus metallidurans (strain ATCC 43123 / DSM 2839 / NBRC 102507 / CH34) (Ralstonia metallidurans).